A 97-amino-acid chain; its full sequence is Citrate lyase acyl carrier protein 2 (97 aa).

Ser14 is subject to O-(phosphoribosyl dephospho-coenzyme A)serine.

The protein belongs to the CitD family. Oligomer with a subunit composition of (alpha,beta,gamma)6.

The protein localises to the cytoplasm. Functionally, covalent carrier of the coenzyme of citrate lyase. The chain is Citrate lyase acyl carrier protein 2 from Salmonella paratyphi A (strain ATCC 9150 / SARB42).